A 194-amino-acid polypeptide reads, in one-letter code: Imidazoleglycerol-phosphate dehydratase (194 aa).

It belongs to the imidazoleglycerol-phosphate dehydratase family.

The protein localises to the cytoplasm. It catalyses the reaction D-erythro-1-(imidazol-4-yl)glycerol 3-phosphate = 3-(imidazol-4-yl)-2-oxopropyl phosphate + H2O. Its pathway is amino-acid biosynthesis; L-histidine biosynthesis; L-histidine from 5-phospho-alpha-D-ribose 1-diphosphate: step 6/9. The chain is Imidazoleglycerol-phosphate dehydratase from Chloroherpeton thalassium (strain ATCC 35110 / GB-78).